The chain runs to 1033 residues: Tyrosine-protein kinase-like otk (1033 aa).

Positions 1-22 are cleaved as a signal peptide; the sequence is MTARMISIYGLVLASMMASVWA. At 23–581 the chain is on the extracellular side; that stretch reads SSSRFQRLPQ…GGDGFLVTRA (559 aa). Ig-like C2-type domains follow at residues 25 to 108, 109 to 199, 251 to 365, 368 to 463, and 468 to 558; these read SRFQ…REAS, PPAK…RVMS, PEDL…LPIS, PGVL…VAIN, and PKFS…VQLV. N-linked (GlcNAc...) asparagine glycosylation occurs at Asn39. Intrachain disulfides connect Cys46–Cys95, Cys137–Cys188, Cys276–Cys354, and Cys399–Cys447. Residues Asn336, Asn417, Asn429, Asn444, Asn457, Asn512, and Asn524 are each glycosylated (N-linked (GlcNAc...) asparagine). Cys490 and Cys542 are joined by a disulfide. Residues 582 to 602 traverse the membrane as a helical segment; that stretch reads VLITMTVALAYIVLVVGLMLW. Over 603 to 1033 the chain is Cytoplasmic; sequence CRYRRQARKA…LSKAMQSVEK (431 aa). Disordered stretches follow at residues 617-679 and 718-760; these read LSTK…KKSA and SPTD…KTSM. A compositionally biased stretch (polar residues) spans 655-673; it reads KSSGDAQKSDDTACSQQSR. At Ser678 the chain carries Phosphoserine. The region spanning 692 to 1028 is the Protein kinase; inactive domain; sequence LSELIQIGRG…QLGAALSKAM (337 aa). Over residues 720–731 the composition is skewed to basic and acidic residues; that stretch reads TDKDADTEKQHS.

This sequence belongs to the protein kinase superfamily. Tyr protein kinase family. Insulin receptor subfamily. Interacts with plexA; component of a receptor complex that mediates the repulsive signaling in response to Semaphorin ligands.

It is found in the cell membrane. Acts as a calcium-dependent, homophilic cell adhesion molecule that regulates neural recognition during the development of the nervous system. Component of the repulsive Plexin signaling response to regulate motor axon guidance at the embryonic stage. Also component of a receptor complex that is required in the adult visual system to innervate the lamina layer; specific targeting of R1-R6 axons. This is Tyrosine-protein kinase-like otk from Drosophila erecta (Fruit fly).